We begin with the raw amino-acid sequence, 292 residues long: Ribosomal RNA small subunit methyltransferase I (292 aa).

Belongs to the methyltransferase superfamily. RsmI family.

It is found in the cytoplasm. It carries out the reaction cytidine(1402) in 16S rRNA + S-adenosyl-L-methionine = 2'-O-methylcytidine(1402) in 16S rRNA + S-adenosyl-L-homocysteine + H(+). Its function is as follows. Catalyzes the 2'-O-methylation of the ribose of cytidine 1402 (C1402) in 16S rRNA. This chain is Ribosomal RNA small subunit methyltransferase I, found in Buchnera aphidicola subsp. Baizongia pistaciae (strain Bp).